The primary structure comprises 494 residues: Guanosine-5'-triphosphate,3'-diphosphate pyrophosphatase (494 aa).

The protein belongs to the GppA/Ppx family. GppA subfamily.

The enzyme catalyses guanosine 3'-diphosphate 5'-triphosphate + H2O = guanosine 3',5'-bis(diphosphate) + phosphate + H(+). Its pathway is purine metabolism; ppGpp biosynthesis; ppGpp from GTP: step 2/2. In terms of biological role, catalyzes the conversion of pppGpp to ppGpp. Guanosine pentaphosphate (pppGpp) is a cytoplasmic signaling molecule which together with ppGpp controls the 'stringent response', an adaptive process that allows bacteria to respond to amino acid starvation, resulting in the coordinated regulation of numerous cellular activities. The chain is Guanosine-5'-triphosphate,3'-diphosphate pyrophosphatase from Shigella sonnei (strain Ss046).